Reading from the N-terminus, the 121-residue chain is Large ribosomal subunit protein uL14c (121 aa).

The protein belongs to the universal ribosomal protein uL14 family. In terms of assembly, part of the 50S ribosomal subunit.

It localises to the plastid. The protein resides in the chloroplast. Functionally, binds to 23S rRNA. In Tetradesmus obliquus (Green alga), this protein is Large ribosomal subunit protein uL14c.